Here is a 212-residue protein sequence, read N- to C-terminus: Methylthioribulose-1-phosphate dehydratase (212 aa).

Histidine 97 and histidine 99 together coordinate Zn(2+).

This sequence belongs to the aldolase class II family. MtnB subfamily. Homotetramer. Zn(2+) is required as a cofactor.

It catalyses the reaction 5-(methylsulfanyl)-D-ribulose 1-phosphate = 5-methylsulfanyl-2,3-dioxopentyl phosphate + H2O. It functions in the pathway amino-acid biosynthesis; L-methionine biosynthesis via salvage pathway; L-methionine from S-methyl-5-thio-alpha-D-ribose 1-phosphate: step 2/6. Its function is as follows. Catalyzes the dehydration of methylthioribulose-1-phosphate (MTRu-1-P) into 2,3-diketo-5-methylthiopentyl-1-phosphate (DK-MTP-1-P). The protein is Methylthioribulose-1-phosphate dehydratase of Bacillus thuringiensis subsp. konkukian (strain 97-27).